The primary structure comprises 414 residues: Multifunctional CCA protein (414 aa).

Positions 8 and 11 each coordinate ATP. CTP-binding residues include Gly-8 and Arg-11. Mg(2+)-binding residues include Glu-21 and Asp-23. ATP is bound by residues Arg-91, Arg-137, and Arg-140. Positions 91, 137, and 140 each coordinate CTP. One can recognise an HD domain in the interval 228 to 329 (TGIHTMMTVA…LKLFDAIDVW (102 aa)).

Belongs to the tRNA nucleotidyltransferase/poly(A) polymerase family. Bacterial CCA-adding enzyme type 1 subfamily. As to quaternary structure, monomer. Can also form homodimers and oligomers. Mg(2+) is required as a cofactor. Ni(2+) serves as cofactor.

The enzyme catalyses a tRNA precursor + 2 CTP + ATP = a tRNA with a 3' CCA end + 3 diphosphate. It carries out the reaction a tRNA with a 3' CCA end + 2 CTP + ATP = a tRNA with a 3' CCACCA end + 3 diphosphate. Catalyzes the addition and repair of the essential 3'-terminal CCA sequence in tRNAs without using a nucleic acid template. Adds these three nucleotides in the order of C, C, and A to the tRNA nucleotide-73, using CTP and ATP as substrates and producing inorganic pyrophosphate. tRNA 3'-terminal CCA addition is required both for tRNA processing and repair. Also involved in tRNA surveillance by mediating tandem CCA addition to generate a CCACCA at the 3' terminus of unstable tRNAs. While stable tRNAs receive only 3'-terminal CCA, unstable tRNAs are marked with CCACCA and rapidly degraded. The sequence is that of Multifunctional CCA protein from Pectobacterium carotovorum subsp. carotovorum (strain PC1).